A 1017-amino-acid chain; its full sequence is Probable DNA ligase (1017 aa).

The segment at 1 to 363 is unknown; the sequence is MPWDVKFSHG…PACATPLHAP (363 aa). The tract at residues 326–352 is disordered; it reads GIRSSPPQVRAGDATPSSRSSGDAGVA. Residues 364 to 1017 are DNA ligase; sequence DSFARFVAAA…GARPPPAASD (654 aa). E667 is a binding site for ATP. Residue K669 is the N6-AMP-lysine intermediate of the active site. Positions 674, 689, 717, 860, and 866 each coordinate ATP.

The protein in the C-terminal section; belongs to the ATP-dependent DNA ligase family. The cofactor is Mg(2+).

The enzyme catalyses ATP + (deoxyribonucleotide)n-3'-hydroxyl + 5'-phospho-(deoxyribonucleotide)m = (deoxyribonucleotide)n+m + AMP + diphosphate.. Its function is as follows. DNA ligase that seals nicks in double-stranded DNA during DNA replication, DNA recombination and DNA repair. The chain is Probable DNA ligase (lig) from Opitutus terrae (strain DSM 11246 / JCM 15787 / PB90-1).